Here is a 462-residue protein sequence, read N- to C-terminus: Succinate semialdehyde dehydrogenase [NAD(P)+] Sad (462 aa).

NADP(+) contacts are provided by residues tryptophan 136–asparagine 137, lysine 160–proline 163, and glycine 212–serine 213. The active-site Proton acceptor is the glutamate 234. An NADP(+)-binding site is contributed by leucine 235. Cysteine 268 functions as the Nucleophile in the catalytic mechanism. Glutamate 365 contributes to the NADP(+) binding site.

Belongs to the aldehyde dehydrogenase family. In terms of assembly, homodimer.

It carries out the reaction succinate semialdehyde + NAD(+) + H2O = succinate + NADH + 2 H(+). The catalysed reaction is succinate semialdehyde + NADP(+) + H2O = succinate + NADPH + 2 H(+). It participates in amino-acid degradation; 4-aminobutanoate degradation. Its function is as follows. Catalyzes the NAD(+)-dependent oxidation of succinate semialdehyde to succinate. It acts preferentially with NAD as cosubstrate but can also use NADP. Prevents the toxic accumulation of succinate semialdehyde (SSA) and plays an important role when arginine and putrescine are used as the sole nitrogen or carbon sources. This is Succinate semialdehyde dehydrogenase [NAD(P)+] Sad (sad) from Escherichia coli (strain K12).